Here is a 576-residue protein sequence, read N- to C-terminus: Putative export ATP-binding/permease protein RC1073 (576 aa).

The region spanning 20–303 (LIIVMISLLS…IFELLSEMHL (284 aa)) is the ABC transmembrane type-1 domain. 6 helical membrane passes run 21 to 41 (IIVMISLLSVSASLLLIGSVF), 57 to 77 (VDNSILYICLLIIILSIASFF), 135 to 155 (FLSFFIRNSVMLIGSITLMFF), 158 to 178 (FKLASIVIITIPILLIPLIKF), 242 to 262 (ALFFAISIAVIFLAITLVVWI), and 277 to 297 (IISFIYYAIIAGVSCGGIFEL). Residues 336–572 (IEFKNVDFTY…SEIYRNICRE (237 aa)) form the ABC transporter domain. An ATP-binding site is contributed by 371-378 (GRSGAGKS).

It belongs to the ABC transporter superfamily. As to quaternary structure, homodimer.

It localises to the cell inner membrane. Part of an ABC transporter complex. Transmembrane domains (TMD) form a pore in the inner membrane and the ATP-binding domain (NBD) is responsible for energy generation. The protein is Putative export ATP-binding/permease protein RC1073 of Rickettsia conorii (strain ATCC VR-613 / Malish 7).